The chain runs to 70 residues: Cecropin-P1 (70 aa).

The N-terminal stretch at 1–13 (MFLIYLFVQTAES) is a signal peptide. A propeptide spans 45-70 (RRRFVAEQDAIHSRVSREVPTLSDSV) (removed in mature form).

Expressed in the body wall, intestine, uterus and ovary.

The protein resides in the secreted. Functionally, has antibacterial activity against several Gram-positive and Gram-negative bacteria. Is weakly active against yeasts. Acts by a nonpore mechanism. The sequence is that of Cecropin-P1 (ASCEC-1) from Ascaris suum (Pig roundworm).